A 71-amino-acid chain; its full sequence is Small ribosomal subunit protein bS21 (71 aa).

Belongs to the bacterial ribosomal protein bS21 family.

This Shewanella woodyi (strain ATCC 51908 / MS32) protein is Small ribosomal subunit protein bS21.